The primary structure comprises 1814 residues: U3 small nucleolar RNA-associated protein 10 (1814 aa).

An HEAT 1 repeat occupies 583–620 (LDFQALLPFLLVALTDASERVRREAAAALAAVGSLYKK). The next 2 membrane-spanning stretches (helical) occupy residues 942 to 962 (IQSG…AIVN) and 998 to 1018 (ALLL…HSVM). 4 HEAT repeats span residues 1042 to 1079 (QTID…AFEH), 1249 to 1286 (LTLV…QNPE), 1293 to 1331 (IRVL…KYGK), and 1770 to 1807 (ALLP…VLGE).

Belongs to the HEATR1/UTP10 family. Component of the ribosomal small subunit (SSU) processome.

It localises to the nucleus. The protein localises to the nucleolus. It is found in the membrane. Its function is as follows. Involved in nucleolar processing of pre-18S ribosomal RNA. Involved in ribosome biosynthesis. The chain is U3 small nucleolar RNA-associated protein 10 from Neosartorya fischeri (strain ATCC 1020 / DSM 3700 / CBS 544.65 / FGSC A1164 / JCM 1740 / NRRL 181 / WB 181) (Aspergillus fischerianus).